The chain runs to 257 residues: MAPSDDLVYMAKLAEQAERYDEMVEAMNSVAKLDEGLTKEERNLLSVGYKNLIGAKRAAMRIIGSIELKEETKGKESHVRQTAEYRRKVEAEMDKICCDVINIIDKYLIPHSSGAESSVFYYKMKGDYYRYLAEFKTGTEKIEVSELSLNAYETASKTAQTDLTPTDPIRLGLALNISVFYCEIMNSPDKACQLAKNAFDEAVAELPSLSEENYKDSTLIMQLLRDNLALWNSDMADDADDIRERTDTTGAKGDPAA.

This sequence belongs to the 14-3-3 family.

Functionally, is associated with a DNA binding complex that binds to the G box, a well-characterized cis-acting DNA regulatory element found in plant genes. The protein is 14-3-3-like protein GF14-G (GF14G) of Oryza sativa subsp. japonica (Rice).